The primary structure comprises 192 residues: Pyridoxal 5'-phosphate synthase subunit PdxT (192 aa).

47 to 49 (GES) contacts L-glutamine. Cys-79 acts as the Nucleophile in catalysis. L-glutamine contacts are provided by residues Arg-106 and 134-135 (IR). Active-site charge relay system residues include His-170 and Glu-172.

It belongs to the glutaminase PdxT/SNO family. In the presence of PdxS, forms a dodecamer of heterodimers. Only shows activity in the heterodimer.

It catalyses the reaction aldehydo-D-ribose 5-phosphate + D-glyceraldehyde 3-phosphate + L-glutamine = pyridoxal 5'-phosphate + L-glutamate + phosphate + 3 H2O + H(+). It carries out the reaction L-glutamine + H2O = L-glutamate + NH4(+). Its pathway is cofactor biosynthesis; pyridoxal 5'-phosphate biosynthesis. Functionally, catalyzes the hydrolysis of glutamine to glutamate and ammonia as part of the biosynthesis of pyridoxal 5'-phosphate. The resulting ammonia molecule is channeled to the active site of PdxS. This Anoxybacillus flavithermus (strain DSM 21510 / WK1) protein is Pyridoxal 5'-phosphate synthase subunit PdxT.